Here is a 143-residue protein sequence, read N- to C-terminus: Endoribonuclease YbeY (143 aa).

Zn(2+) contacts are provided by H111, H115, and D121.

Belongs to the endoribonuclease YbeY family. Zn(2+) serves as cofactor.

It localises to the cytoplasm. In terms of biological role, single strand-specific metallo-endoribonuclease involved in late-stage 70S ribosome quality control and in maturation of the 3' terminus of the 16S rRNA. The protein is Endoribonuclease YbeY of Cytophaga hutchinsonii (strain ATCC 33406 / DSM 1761 / CIP 103989 / NBRC 15051 / NCIMB 9469 / D465).